The following is a 91-amino-acid chain: Large ribosomal subunit protein eL37 (91 aa).

4 residues coordinate Zn(2+): Cys19, Cys22, Cys34, and Cys37. The segment at 19–37 adopts a C4-type zinc-finger fold; it reads CRRCGKSSFHIQKKTCASC.

It belongs to the eukaryotic ribosomal protein eL37 family. The cofactor is Zn(2+).

Binds to the 23S rRNA. This Dictyostelium discoideum (Social amoeba) protein is Large ribosomal subunit protein eL37 (rpl37).